We begin with the raw amino-acid sequence, 603 residues long: Putative ankyrin repeat protein FPV162 (603 aa).

ANK repeat units lie at residues 23–53 (FKDT…DINV), 57–87 (FKKT…NVNV), 91–120 (FEST…DPNT), 124–155 (NGQT…NVNA), 159–189 (KHNT…DVKI), 193–223 (DGIT…DVNA), 227–257 (EGNT…EVNA), 261–291 (VGDT…NVNA), 295–325 (ISVT…EVNS), 329–362 (YGRT…DIEA), 366–397 (IGGT…DINT), 401–428 (RDET…STNI), 432–467 (SNIT…DIKN), and 504–533 (NNMY…DIYL).

The chain is Putative ankyrin repeat protein FPV162 from Vertebrata (FPV).